The sequence spans 351 residues: Cytoplasmic dynein 2 light intermediate chain 1 (351 aa).

The protein belongs to the dynein light intermediate chain family. As to quaternary structure, light intermediate chain of the cytoplasmic dynein complex 2, a multisubunit complex composed at least of eleven different proteins. The cytoplasmic dynein 2 complex consists of two catalytic heavy chains (HCs) and a number of non-catalytic subunits presented by intermediate chains (ICs), light intermediate chains (LICs) and light chains (LCs). Among them, a heavy chain (DYNC2H1), two intermediate chains (DYNC2I2 and DYNC2I1), a light intermediate chain (DYNC2LI1), and a light chain (DYNLT2B) are unique to the dynein-2 complex, but a subset of light chains are also shared by dynein-1 and dynein-2 complexes. Dynein-2 complex is built around two copies of cytoplasmic dynein 2 heavy chain 1 (DYNC2H1). The C-terminal region of DYNC2H1 forms the motor domain, which converts the energy from ATP hydrolysis into movement. Its N-terminal region forms the tail, an extended structure that binds the other subunits and holds the two heavy chains in a homodimer. Interacts with DYNC2H1 (via N-terminus); this interaction stabilizes the dynein-2 complex structure. In terms of tissue distribution, expressed in bone, brain, kidney, and cartilage. Lower expression in heart, liver, lung, placenta and thymus.

Its subcellular location is the golgi apparatus. It is found in the cytoplasm. The protein resides in the cell projection. The protein localises to the cilium. It localises to the cytoskeleton. Its subcellular location is the cilium basal body. It is found in the cilium axoneme. The protein resides in the microtubule organizing center. The protein localises to the centrosome. Acts as one of several non-catalytic accessory components of the cytoplasmic dynein 2 complex (dynein-2 complex), a motor protein complex that drives the movement of cargos along microtubules within cilia and flagella in concert with the intraflagellar transport (IFT) system, facilitating the assembly of these organelles. Involved in the regulation of ciliary length. The protein is Cytoplasmic dynein 2 light intermediate chain 1 (DYNC2LI1) of Homo sapiens (Human).